The chain runs to 364 residues: Probable dual-specificity RNA methyltransferase RlmN (364 aa).

The Proton acceptor role is filled by E107. The Radical SAM core domain occupies 113-346; that stretch reads HNYGNSVCVT…VTIRREHGHD (234 aa). Cysteines 120 and 351 form a disulfide. Residues C127, C131, and C134 each coordinate [4Fe-4S] cluster. S-adenosyl-L-methionine contacts are provided by residues 177–178, S209, 232–234, and N308; these read GE and SLH. The S-methylcysteine intermediate role is filled by C351.

The protein belongs to the radical SAM superfamily. RlmN family. [4Fe-4S] cluster serves as cofactor.

The protein localises to the cytoplasm. The catalysed reaction is adenosine(2503) in 23S rRNA + 2 reduced [2Fe-2S]-[ferredoxin] + 2 S-adenosyl-L-methionine = 2-methyladenosine(2503) in 23S rRNA + 5'-deoxyadenosine + L-methionine + 2 oxidized [2Fe-2S]-[ferredoxin] + S-adenosyl-L-homocysteine. It carries out the reaction adenosine(37) in tRNA + 2 reduced [2Fe-2S]-[ferredoxin] + 2 S-adenosyl-L-methionine = 2-methyladenosine(37) in tRNA + 5'-deoxyadenosine + L-methionine + 2 oxidized [2Fe-2S]-[ferredoxin] + S-adenosyl-L-homocysteine. Its function is as follows. Specifically methylates position 2 of adenine 2503 in 23S rRNA and position 2 of adenine 37 in tRNAs. This is Probable dual-specificity RNA methyltransferase RlmN from Geobacillus thermodenitrificans (strain NG80-2).